A 1212-amino-acid chain; its full sequence is DNA topoisomerase 1 (1212 aa).

The Toprim domain occupies 1 to 114; that stretch reads MKLVVVESPA…DVERVTFNAI (114 aa). Residues glutamate 7 and aspartate 80 each contribute to the Mg(2+) site. The region spanning 130–556 is the Topo IA-type catalytic domain; it reads DNDLINAYLA…AFWHDFKPKT (427 aa). The interaction with DNA stretch occupies residues 164-169; that stretch reads SAGRVQ. Residue tyrosine 293 is the O-(5'-phospho-DNA)-tyrosine intermediate of the active site. Residues 592 to 619 form a C4-type zinc finger; sequence CPSCHTGRLALKGGRFGAFIACSNYPEC. Disordered regions lie at residues 687-742, 758-937, and 1107-1212; these read GKGN…GVST, ALAG…KARA, and RAKM…EVAE. Composition is skewed to polar residues over residues 708 to 742 and 770 to 782; these read ASST…GVST and VSDN…SSTI. Residues 815-840 are compositionally biased toward basic and acidic residues; that stretch reads ADNRLLSHRNGDIDSRAIPADHKDSS. Composition is skewed to polar residues over residues 881 to 890 and 897 to 906; these read AITSDNSPSD and STPSSATSSV. Over residues 921–934 the composition is skewed to basic and acidic residues; the sequence is KADEQAKEEEESRK. Residues 1109–1140 show a composition bias toward basic residues; sequence KMPKKKKTKKAAAKKPAAKKTTTKKAAPKKAT. The segment covering 1141 to 1151 has biased composition (low complexity); the sequence is TKTATPKSATT. The span at 1167 to 1182 shows a compositional bias: basic residues; sequence PAKKAVAKKTTAKKPA. The span at 1183–1199 shows a compositional bias: low complexity; the sequence is SKSATKKAPSSKTTAAK.

This sequence belongs to the type IA topoisomerase family. In terms of assembly, monomer. Requires Mg(2+) as cofactor.

It carries out the reaction ATP-independent breakage of single-stranded DNA, followed by passage and rejoining.. Releases the supercoiling and torsional tension of DNA, which is introduced during the DNA replication and transcription, by transiently cleaving and rejoining one strand of the DNA duplex. Introduces a single-strand break via transesterification at a target site in duplex DNA. The scissile phosphodiester is attacked by the catalytic tyrosine of the enzyme, resulting in the formation of a DNA-(5'-phosphotyrosyl)-enzyme intermediate and the expulsion of a 3'-OH DNA strand. The free DNA strand then undergoes passage around the unbroken strand, thus removing DNA supercoils. Finally, in the religation step, the DNA 3'-OH attacks the covalent intermediate to expel the active-site tyrosine and restore the DNA phosphodiester backbone. This Zymomonas mobilis subsp. mobilis (strain ATCC 31821 / ZM4 / CP4) protein is DNA topoisomerase 1.